The following is a 133-amino-acid chain: Small ribosomal subunit protein uS8 (133 aa).

Residues 1–29 form a disordered region; the sequence is MANHDPISDMLTRIRNASEKRHETTRIPA. Residues 16–25 show a composition bias toward basic and acidic residues; the sequence is NASEKRHETT.

This sequence belongs to the universal ribosomal protein uS8 family. As to quaternary structure, part of the 30S ribosomal subunit. Contacts proteins S5 and S12.

In terms of biological role, one of the primary rRNA binding proteins, it binds directly to 16S rRNA central domain where it helps coordinate assembly of the platform of the 30S subunit. This is Small ribosomal subunit protein uS8 from Prochlorococcus marinus (strain MIT 9211).